The chain runs to 151 residues: MTSKPSGSVSWFQVFQRGQHYMKTWPSDKRLAPVFPENRVASATRFAVRFMPPLAVFTLTWQIALGGQLGPAIATALFACSMPMQGLWWLGRRSVTPLPPTLLQWFHEVRNKLAEAGQAVAPVEGTPTYQALADLLKRAFKQLDKTFLDDL.

2 helical membrane passes run 46-64 (FAVRFMPPLAVFTLTWQIA) and 70-90 (GPAIATALFACSMPMQGLWWL).

It belongs to the UPF0208 family.

The protein resides in the cell inner membrane. The polypeptide is UPF0208 membrane protein Spro_3315 (Serratia proteamaculans (strain 568)).